The chain runs to 203 residues: UPF0301 protein Sde_3637 (203 aa).

The protein belongs to the UPF0301 (AlgH) family.

The sequence is that of UPF0301 protein Sde_3637 from Saccharophagus degradans (strain 2-40 / ATCC 43961 / DSM 17024).